The following is a 604-amino-acid chain: MSENLIGYIDDQGNIIDTQSAGENCTARPIEFDNSEKSLEIIRHSTAHLMAQAIKELYPDAQFFVGPVVDEGFYYDFRVNEKIGEEDLKTIEKKMKELIKKKYKIEKYEISKDEALKKFANDDLKQAVLSRIPDETVSIYKQGDFEDLCRGPHVPALRFLHNFKLTRVAGAYLGGDENAEMLTRIYGIAFADKESLKSYLKMMEEAKKRDHRKIGTEMELFMFNEESGAGLPFWMPQGAKLRYKLEQILHKAHLVRDYEPVRGPEILKADMWRTSGHYACYGENMYLTEIDGQEYGIKPMNCIGHIQIFKQTQKSYRDLPVKYYEYGVVHRHEKSGVLHGLLRVREFTQDDAHIFCAPEQIASEVLEVVEFVDSVMKLFEFEYTMEISTKPEKAIGDDEVWETATQGLKDALKGNDLPYTIDEGGGAFYGPKIDIKITDAIGRKWQCGTIQVDFNLPERFDVEYVAEDNSRKRPVMLHRAILGSFERFIGILTEHYAGEFPFFIAPTQVIFVPISEGHAGYAYGLKKKLMLEGIDSEVSDKNDSLNKRIRTAEKQRVPYVVIIGDEEVQNNTVAIRNRRTREQYNLTQDEFMVELTKQLQEGKI.

Residues 210–501 (DHRKIGTEME…LTEHYAGEFP (292 aa)) form a catalytic region. C302, H353, and H478 together coordinate Zn(2+).

It belongs to the class-II aminoacyl-tRNA synthetase family. In terms of assembly, homodimer. It depends on Zn(2+) as a cofactor.

Its subcellular location is the cytoplasm. It carries out the reaction tRNA(Thr) + L-threonine + ATP = L-threonyl-tRNA(Thr) + AMP + diphosphate + H(+). Its function is as follows. Catalyzes the attachment of threonine to tRNA(Thr) in a two-step reaction: L-threonine is first activated by ATP to form Thr-AMP and then transferred to the acceptor end of tRNA(Thr). Also edits incorrectly charged L-seryl-tRNA(Thr). The chain is Threonine--tRNA ligase from Sulfurovum sp. (strain NBC37-1).